The chain runs to 148 residues: Ubiquitin-conjugating enzyme E2 5B (148 aa).

One can recognise a UBC core domain in the interval 1–147 (MASKRILKEL…ARSWTQKYAM (147 aa)). The active-site Glycyl thioester intermediate is the Cys-85.

Belongs to the ubiquitin-conjugating enzyme family.

The enzyme catalyses S-ubiquitinyl-[E1 ubiquitin-activating enzyme]-L-cysteine + [E2 ubiquitin-conjugating enzyme]-L-cysteine = [E1 ubiquitin-activating enzyme]-L-cysteine + S-ubiquitinyl-[E2 ubiquitin-conjugating enzyme]-L-cysteine.. The protein operates within protein modification; protein ubiquitination. E2 conjugating enzyme that associates with the E3 ubiquitin-protein ligase EL5 to mediate ubiquitination of target proteins. The chain is Ubiquitin-conjugating enzyme E2 5B (UBC5B) from Oryza sativa subsp. japonica (Rice).